We begin with the raw amino-acid sequence, 153 residues long: Proline-rich membrane anchor 1 (153 aa).

A signal peptide spans 1–35; that stretch reads MLLRDLVPRHGCCWPSLLLHCALHPLWGLVQVTHA. Residues 36–92 are Extracellular-facing; the sequence is EPQKSCSKVTDSCQHICQCRPPPPLPPPPPPPPPPRLLSAPAPNSTSCPAEDSWWSG. In terms of domain architecture, PRAD spans 56 to 70; it reads PPPPLPPPPPPPPPP. Residues 59–71 are compositionally biased toward pro residues; that stretch reads PLPPPPPPPPPPR. Positions 59–79 are disordered; the sequence is PLPPPPPPPPPPRLLSAPAPN. Residue Asn79 is glycosylated (N-linked (GlcNAc...) asparagine). A helical membrane pass occupies residues 93 to 113; it reads LVIIVAVVCASLVFLTVLVII. Residues 114 to 153 are Cytoplasmic-facing; sequence CYKAIKRKPLRKDENGTSVAEYPMSSSQSHKGVDVNAAVV. The disordered stretch occupies residues 129-153; it reads GTSVAEYPMSSSQSHKGVDVNAAVV.

Interacts with ACHE, probably through disulfide bonds. In terms of tissue distribution, predominantly expressed in the central nervous system, including in the brain. Also expressed in muscle, heart and kidney. Isoform 1 may be predominant in the cortex and striatum, while isoform 2 is more abundant in the cerebellum.

It is found in the cell membrane. It localises to the cell junction. The protein resides in the synapse. Required to anchor acetylcholinesterase (ACHE) to the basal lamina of the neuromuscular junction and to the membrane of neuronal synapses in brain. Also able to organize ACHE into tetramers. The protein is Proline-rich membrane anchor 1 (Prima1) of Mus musculus (Mouse).